Here is a 405-residue protein sequence, read N- to C-terminus: Tryptophan synthase beta chain (405 aa).

An N6-(pyridoxal phosphate)lysine modification is found at Lys95.

It belongs to the TrpB family. In terms of assembly, tetramer of two alpha and two beta chains. Pyridoxal 5'-phosphate is required as a cofactor.

It catalyses the reaction (1S,2R)-1-C-(indol-3-yl)glycerol 3-phosphate + L-serine = D-glyceraldehyde 3-phosphate + L-tryptophan + H2O. It participates in amino-acid biosynthesis; L-tryptophan biosynthesis; L-tryptophan from chorismate: step 5/5. In terms of biological role, the beta subunit is responsible for the synthesis of L-tryptophan from indole and L-serine. The polypeptide is Tryptophan synthase beta chain (Pseudomonas putida (strain W619)).